Reading from the N-terminus, the 428-residue chain is Serine hydroxymethyltransferase (428 aa).

(6S)-5,6,7,8-tetrahydrofolate contacts are provided by residues L127 and G131–L133. Position 236 is an N6-(pyridoxal phosphate)lysine (K236).

Belongs to the SHMT family. In terms of assembly, homodimer. Requires pyridoxal 5'-phosphate as cofactor.

The protein localises to the cytoplasm. It catalyses the reaction (6R)-5,10-methylene-5,6,7,8-tetrahydrofolate + glycine + H2O = (6S)-5,6,7,8-tetrahydrofolate + L-serine. The protein operates within one-carbon metabolism; tetrahydrofolate interconversion. It functions in the pathway amino-acid biosynthesis; glycine biosynthesis; glycine from L-serine: step 1/1. In terms of biological role, catalyzes the reversible interconversion of serine and glycine with tetrahydrofolate (THF) serving as the one-carbon carrier. This reaction serves as the major source of one-carbon groups required for the biosynthesis of purines, thymidylate, methionine, and other important biomolecules. Also exhibits THF-independent aldolase activity toward beta-hydroxyamino acids, producing glycine and aldehydes, via a retro-aldol mechanism. This is Serine hydroxymethyltransferase from Tropheryma whipplei (strain TW08/27) (Whipple's bacillus).